The sequence spans 81 residues: Small ribosomal subunit protein bS18 (81 aa).

Belongs to the bacterial ribosomal protein bS18 family. In terms of assembly, part of the 30S ribosomal subunit. Forms a tight heterodimer with protein bS6.

Binds as a heterodimer with protein bS6 to the central domain of the 16S rRNA, where it helps stabilize the platform of the 30S subunit. This is Small ribosomal subunit protein bS18 from Leptospira borgpetersenii serovar Hardjo-bovis (strain JB197).